The chain runs to 201 residues: tRNA (guanine-N(7)-)-methyltransferase (201 aa).

S-adenosyl-L-methionine is bound by residues Glu-33, Glu-58, Asp-85, and Asp-108. The active site involves Asp-108. Residues Lys-112 and Asp-144 each contribute to the substrate site.

This sequence belongs to the class I-like SAM-binding methyltransferase superfamily. TrmB family.

The catalysed reaction is guanosine(46) in tRNA + S-adenosyl-L-methionine = N(7)-methylguanosine(46) in tRNA + S-adenosyl-L-homocysteine. It functions in the pathway tRNA modification; N(7)-methylguanine-tRNA biosynthesis. Catalyzes the formation of N(7)-methylguanine at position 46 (m7G46) in tRNA. The sequence is that of tRNA (guanine-N(7)-)-methyltransferase from Anaeromyxobacter dehalogenans (strain 2CP-C).